The sequence spans 324 residues: Large ribosomal subunit protein uL3m (324 aa).

The N-terminal 41 residues, 1 to 41 (MAAVPRGLLSRINQFLSIRSITPSSSESLPHCSSFFLIRRF), are a transit peptide targeting the mitochondrion. The interval 206-229 (PASHGASLSHRSGGSTGQRDAPGK) is disordered.

The protein belongs to the universal ribosomal protein uL3 family. In terms of assembly, part of the 50S ribosomal subunit.

The protein resides in the mitochondrion. In terms of biological role, one of the primary rRNA binding proteins, it binds directly near the 3'-end of the 23S rRNA, where it nucleates assembly of the 50S subunit. The polypeptide is Large ribosomal subunit protein uL3m (Arabidopsis thaliana (Mouse-ear cress)).